We begin with the raw amino-acid sequence, 321 residues long: D-alanine--D-alanine ligase (321 aa).

In terms of domain architecture, ATP-grasp spans 121 to 315; it reads RSWFLTNNIN…FTNLIEEIIK (195 aa). 147–199 contacts ATP; that stretch reads PMKRPYVIKPLTQGSSIGVEVIFAEDNFNFADYDFPYGDQVIIEQYIKGRELQ. Mg(2+) is bound by residues Glu268, Glu282, and Asn284.

This sequence belongs to the D-alanine--D-alanine ligase family. Mg(2+) is required as a cofactor. The cofactor is Mn(2+).

It is found in the cytoplasm. The catalysed reaction is 2 D-alanine + ATP = D-alanyl-D-alanine + ADP + phosphate + H(+). The protein operates within cell wall biogenesis; peptidoglycan biosynthesis. Functionally, cell wall formation. The protein is D-alanine--D-alanine ligase of Rickettsia massiliae (strain Mtu5).